Reading from the N-terminus, the 268-residue chain is Nickel import ATP-binding protein NikE (268 aa).

Positions Leu-4–Asn-252 constitute an ABC transporter domain. Gly-45–Ser-52 is a binding site for ATP.

The protein belongs to the ABC transporter superfamily. Nickel importer (TC 3.A.1.5.3) family. In terms of assembly, the complex is composed of two ATP-binding proteins (NikD and NikE), two transmembrane proteins (NikB and NikC) and a solute-binding protein (NikA).

It is found in the cell inner membrane. The enzyme catalyses Ni(2+)(out) + ATP + H2O = Ni(2+)(in) + ADP + phosphate + H(+). Functionally, part of the ABC transporter complex NikABCDE involved in nickel import. Responsible for energy coupling to the transport system. The protein is Nickel import ATP-binding protein NikE of Shigella boydii serotype 4 (strain Sb227).